The primary structure comprises 359 residues: Trans-enoyl reductase mpsG (359 aa).

NADP(+)-binding residues include Tyr-212, Leu-259, and Thr-278.

The protein belongs to the zinc-containing alcohol dehydrogenase family. In terms of assembly, monomer.

It functions in the pathway secondary metabolite biosynthesis. In terms of biological role, trans-enoyl reductase; part of the gene cluster that mediates the biosynthesis of macrophasetins, 3-decalinoyltetramic acids (DTAs) which feature a tetramate (pyrrolidine-2,4-dione) unit connected to a decalin fragment and that have potent bioactivities. The PKS-NRPS mpsA together with its associated enoylreductase partner mpsG incorporate one unit of acetyl-CoA, seven units of malonyl-CoA, and one unit of L-alanine to assemble the linear tetramic acid intermediate corresponding to the backbone of macrophasetins. Without the Diels-Alderase mpsD, the mpsA/G product can undergo the non-enzymatic intramolecular Diels-Alder (IMDA) reaction to generate both macrophasetin A and macrophasetin B. Catalyzed by mpsD, the linear tetramic acid intermediate is thoroughly converted to macrophasetin A via the endo-IMDA reaction in a regioselective and stereoselective manner. Finally, the cytochrome P450 monooxygenase mpsF catalyzes the hydroxylation at C20 to yield the end product macrophasetin C. The sequence is that of Trans-enoyl reductase mpsG from Macrophomina phaseolina (strain MS6) (Charcoal rot fungus).